Here is a 933-residue protein sequence, read N- to C-terminus: Phosphoenolpyruvate carboxylase (933 aa).

Active-site residues include histidine 164 and lysine 595.

It belongs to the PEPCase type 1 family. Mg(2+) is required as a cofactor.

It catalyses the reaction oxaloacetate + phosphate = phosphoenolpyruvate + hydrogencarbonate. Functionally, forms oxaloacetate, a four-carbon dicarboxylic acid source for the tricarboxylic acid cycle. This is Phosphoenolpyruvate carboxylase from Rhodopseudomonas palustris (strain BisB5).